Reading from the N-terminus, the 423-residue chain is CinA-like protein (423 aa).

Belongs to the CinA family.

The polypeptide is CinA-like protein (Synechococcus sp. (strain CC9311)).